The following is a 190-amino-acid chain: Protein GrpE (190 aa).

Residues 1-26 (MADKEKDAVIVDETEHVDVDSKESKK) show a composition bias toward basic and acidic residues. Residues 1–31 (MADKEKDAVIVDETEHVDVDSKESKKEKKTK) form a disordered region.

It belongs to the GrpE family. In terms of assembly, homodimer.

It localises to the cytoplasm. Its function is as follows. Participates actively in the response to hyperosmotic and heat shock by preventing the aggregation of stress-denatured proteins, in association with DnaK and GrpE. It is the nucleotide exchange factor for DnaK and may function as a thermosensor. Unfolded proteins bind initially to DnaJ; upon interaction with the DnaJ-bound protein, DnaK hydrolyzes its bound ATP, resulting in the formation of a stable complex. GrpE releases ADP from DnaK; ATP binding to DnaK triggers the release of the substrate protein, thus completing the reaction cycle. Several rounds of ATP-dependent interactions between DnaJ, DnaK and GrpE are required for fully efficient folding. The protein is Protein GrpE of Acholeplasma laidlawii (strain PG-8A).